Consider the following 311-residue polypeptide: Malate dehydrogenase (311 aa).

NAD(+) contacts are provided by residues 7–13 and Asp-34; that span reads GAAGGIG. Residues Arg-81 and Arg-87 each coordinate substrate. NAD(+)-binding positions include Asn-94 and 117–119; that span reads ITN. Substrate contacts are provided by Asn-119 and Arg-153. The active-site Proton acceptor is His-177. Met-227 is a binding site for NAD(+).

This sequence belongs to the LDH/MDH superfamily. MDH type 1 family. In terms of assembly, homodimer.

It carries out the reaction (S)-malate + NAD(+) = oxaloacetate + NADH + H(+). In terms of biological role, catalyzes the reversible oxidation of malate to oxaloacetate. This chain is Malate dehydrogenase, found in Vibrio campbellii (strain ATCC BAA-1116).